Reading from the N-terminus, the 181-residue chain is RNA pyrophosphohydrolase (181 aa).

The Nudix hydrolase domain occupies 6–150; the sequence is GYRPNVGIII…KCEVYRCALK (145 aa). Positions 38 to 59 match the Nudix box motif; sequence GGIKEGETPEQAMYRELYEEVG.

It belongs to the Nudix hydrolase family. RppH subfamily. Requires a divalent metal cation as cofactor.

Its function is as follows. Accelerates the degradation of transcripts by removing pyrophosphate from the 5'-end of triphosphorylated RNA, leading to a more labile monophosphorylated state that can stimulate subsequent ribonuclease cleavage. The chain is RNA pyrophosphohydrolase from Psychromonas ingrahamii (strain DSM 17664 / CCUG 51855 / 37).